The sequence spans 491 residues: Serine/threonine-protein kinase 33 (491 aa).

The interval 51-89 is disordered; sequence FASQERKKERNTSRESSLKDLSIRTSNVERKPQAQWSRS. Over residues 54 to 82 the composition is skewed to basic and acidic residues; sequence QERKKERNTSRESSLKDLSIRTSNVERKP. The 267-residue stretch at 111–377 folds into the Protein kinase domain; that stretch reads YTFGRILGQG…AKELLDNQWL (267 aa). ATP contacts are provided by residues 117–125 and lysine 140; that span reads LGQGSFGMV. The Proton acceptor role is filled by aspartate 233. The interval 398 to 491 is disordered; that stretch reads KNNPESDEET…TTLFRGKKRL (94 aa). A compositionally biased stretch (acidic residues) spans 402–414; sequence ESDEETNTDEETE. Residue serine 403 is modified to Phosphoserine. Residues 415 to 431 are compositionally biased toward polar residues; sequence QSAVYSPSANTAKQPTN. The segment covering 445–457 has biased composition (low complexity); the sequence is SSNSSSSKLLSAE. Over residues 475–484 the composition is skewed to polar residues; it reads AKTTLKSTTL.

It belongs to the protein kinase superfamily. CAMK Ser/Thr protein kinase family. CaMK subfamily. Homodimer. Autophosphorylated. In terms of tissue distribution, highly expressed in testis, particularly in cells from the spermatogenic epithelia. Present in meiotic and post meiotic sperm cells. Significant expression is detected in lung epithelia, alveolar macrophages, horizontal cells in the retina and in embryonic organs such as heart, brain and spinal cord. Also expressed in pituitary gland, kidney, pancreas, trachea and thyroid gland.

The protein resides in the cytoplasm. It localises to the cytoskeleton. It is found in the perinuclear region. It catalyses the reaction L-seryl-[protein] + ATP = O-phospho-L-seryl-[protein] + ADP + H(+). The catalysed reaction is L-threonyl-[protein] + ATP = O-phospho-L-threonyl-[protein] + ADP + H(+). With respect to regulation, specifically inhibited by CDD-2807 ((3-([1,1'-Biphenyl]-2-ylethynyl)-1H-indazol-5-yl)(2,6-diazaspiro[3.5]nonan-2-yl)methanone). CDD-2807 is a potential male contraceptive drug: it is not toxic, efficiently crosses the blood-testis barrier and induces a reversible contraceptive effect in male mice. In terms of biological role, serine/threonine protein kinase required for spermatid differentiation and male fertility. Promotes sperm flagella assembly during spermatogenesis by mediating phosphorylation of fibrous sheath proteins AKAP3 and AKAP4. Also phosphorylates vimentin/VIM, thereby regulating the dynamic behavior of the intermediate filament cytoskeleton. This chain is Serine/threonine-protein kinase 33, found in Mus musculus (Mouse).